We begin with the raw amino-acid sequence, 534 residues long: Major facilitator-type transporter sor6 (534 aa).

Asn29 and Asn36 each carry an N-linked (GlcNAc...) asparagine glycan. Transmembrane regions (helical) follow at residues 66–86 (WFLTSIVTFSVFAVTFTSSAY), 103–123 (LFITGVSVFVLGFAIGPAVWG), 160–180 (AMVAFMAGSAGSPNIATLIVL), 182–202 (FLAGTFGGSPLVNSGGAIADL), 209–229 (GLAMTIYCVAPFLGPILGPIV), 241–261 (WVQGMCTIFIGVIGIIGVIFV), 318–338 (IVLIASLYMAIIYGTVYMFLG), 354–374 (FGGLAFLGMMVGIIIGLGYAI), 395–415 (LPPAIAGAVALPIGMFAFAWT), 424–444 (VSIVLSAPFGFGVVLVILPIV), 456–476 (ASVLAAAAVFRSIMGAVFPLF), and 486–506 (IHWATSIPAFLTLVCMPFPFF).

This sequence belongs to the major facilitator superfamily. Sugar transporter (TC 2.A.1.1) family.

The protein localises to the membrane. In terms of biological role, major facilitator-type transporter; part of the gene cluster that mediates the biosynthesis of sorbicillinoids, a diverse group of yellow secondary metabolites that restrict growth of competing pathogenic fungi but not of bacteria. In Hypocrea jecorina (strain QM6a) (Trichoderma reesei), this protein is Major facilitator-type transporter sor6.